Consider the following 205-residue polypeptide: Holliday junction branch migration complex subunit RuvA (205 aa).

A domain I region spans residues 1 to 62; sequence MFEYVTGYVE…EDIMALYGFK (62 aa). Residues 63 to 141 are domain II; the sequence is TREERLLFTK…DVVPDAFVDL (79 aa). The flexible linker stretch occupies residues 142 to 152; the sequence is FSDTERFDEKK. The interval 153 to 205 is domain III; that stretch reads GSSAELDEALEALRALGYAEREVSRVVPELLKESLTTDQYIKKALSLLLNGKR.

It belongs to the RuvA family. Homotetramer. Forms an RuvA(8)-RuvB(12)-Holliday junction (HJ) complex. HJ DNA is sandwiched between 2 RuvA tetramers; dsDNA enters through RuvA and exits via RuvB. An RuvB hexamer assembles on each DNA strand where it exits the tetramer. Each RuvB hexamer is contacted by two RuvA subunits (via domain III) on 2 adjacent RuvB subunits; this complex drives branch migration. In the full resolvosome a probable DNA-RuvA(4)-RuvB(12)-RuvC(2) complex forms which resolves the HJ.

It localises to the cytoplasm. In terms of biological role, the RuvA-RuvB-RuvC complex processes Holliday junction (HJ) DNA during genetic recombination and DNA repair, while the RuvA-RuvB complex plays an important role in the rescue of blocked DNA replication forks via replication fork reversal (RFR). RuvA specifically binds to HJ cruciform DNA, conferring on it an open structure. The RuvB hexamer acts as an ATP-dependent pump, pulling dsDNA into and through the RuvAB complex. HJ branch migration allows RuvC to scan DNA until it finds its consensus sequence, where it cleaves and resolves the cruciform DNA. This Bacillus cereus (strain ATCC 14579 / DSM 31 / CCUG 7414 / JCM 2152 / NBRC 15305 / NCIMB 9373 / NCTC 2599 / NRRL B-3711) protein is Holliday junction branch migration complex subunit RuvA.